We begin with the raw amino-acid sequence, 143 residues long: Photosystem I reaction center subunit IV B, chloroplastic (143 aa).

The N-terminal 51 residues, 1–51, are a transit peptide targeting the chloroplast; it reads MASSSMASAASGFMVATPNIATSNTAPRTSMLFFSSSKNNTTTNFPRLVVR. Residues 56-75 show a composition bias toward low complexity; the sequence is AAPPAATATAEGEAPPAKAA. The interval 56 to 86 is disordered; the sequence is AAPPAATATAEGEAPPAKAAKPPPIGPKRGT.

This sequence belongs to the PsaE family. Post-translationally, 2 isoforms exists (ratio 1:1). With or without the N-terminal alanine.

It is found in the plastid. The protein resides in the chloroplast thylakoid membrane. Its function is as follows. Stabilizes the interaction between PsaC and the PSI core, assists the docking of the ferredoxin to PSI and interacts with ferredoxin-NADP oxidoreductase. The sequence is that of Photosystem I reaction center subunit IV B, chloroplastic (PSAEB) from Nicotiana sylvestris (Wood tobacco).